The primary structure comprises 206 residues: Cytochrome c biogenesis ATP-binding export protein CcmA (206 aa).

The ABC transporter domain occupies L4–L205. An ATP-binding site is contributed by G36–T43.

This sequence belongs to the ABC transporter superfamily. CcmA exporter (TC 3.A.1.107) family. As to quaternary structure, the complex is composed of two ATP-binding proteins (CcmA) and two transmembrane proteins (CcmB).

The protein localises to the cell inner membrane. The enzyme catalyses heme b(in) + ATP + H2O = heme b(out) + ADP + phosphate + H(+). In terms of biological role, part of the ABC transporter complex CcmAB involved in the biogenesis of c-type cytochromes; once thought to export heme, this seems not to be the case, but its exact role is uncertain. Responsible for energy coupling to the transport system. This chain is Cytochrome c biogenesis ATP-binding export protein CcmA, found in Nitrosospira multiformis (strain ATCC 25196 / NCIMB 11849 / C 71).